Here is a 661-residue protein sequence, read N- to C-terminus: MEMTEMTGVSLKRGALVVEDNDSGVPVEETKKQKLSECSLTKGQDGLQNDFLSISEDVPRPPDTVSTGKGGKNSEAQLEDEEEEEEDGLSEECEEEESESFADMMKHGLTEADVGITKFVSSHQGFSGILKERYSDFVVHEIGKDGRISHLNDLSIPVDEEDPSEDIFTVLTAEEKQRLEELQLFKNKETSVAIEVIEDTKEKRTIIHQAIKSLFPGLETKTEDREGKKYIVAYHAAGKKALANPRKHSWPKSRGSYCHFVLYKENKDTMDAINVLSKYLRVKPNIFSYMGTKDKRAITVQEIAVLKITAQRLAHLNKCLMNFKLGNFSYQKNPLKLGELQGNHFTVVLRNITGTDDQVQQAMNSLKEIGFINYYGMQRFGTTAVPTYQVGRAILQNSWTEVMDLILKPRSGAEKGYLVKCREEWAKTKDPTAALRKLPVKRCVEGQLLRGLSKYGMKNIVSAFGIIPRNNRLMYIHSYQSYVWNNMVSKRIEDYGLKPVPGDLVLKGATATYIEEDDVNNYSIHDVVMPLPGFDVIYPKHKIQEAYREMLTADNLDIDNMRHKIRDYSLSGAYRKIIIRPQNVSWEVVAYDDPKIPLFNTDVDNLEGKTPPVFASEGKYRALKMDFSLPPSTYATMAIREVLKMDTSIKNQTQLNTTWLR.

Residue Met1 is modified to N-acetylmethionine. The disordered stretch occupies residues 1–97; it reads MEMTEMTGVS…GLSEECEEEE (97 aa). Ser10 is subject to Phosphoserine. Polar residues predominate over residues 36 to 52; the sequence is SECSLTKGQDGLQNDFL. The segment covering 77-97 has biased composition (acidic residues); that stretch reads QLEDEEEEEEDGLSEECEEEE. The residue at position 127 (Ser127) is a Phosphoserine. Asp294 acts as the Nucleophile in catalysis. The region spanning 370–580 is the TRUD domain; that stretch reads GFINYYGMQR…SGAYRKIIIR (211 aa). Thr610 carries the post-translational modification Phosphothreonine.

It belongs to the pseudouridine synthase TruD family. As to quaternary structure, interacts with SIRT1.

The protein localises to the nucleus. It carries out the reaction a uridine in tRNA = a pseudouridine in tRNA. It catalyses the reaction uridine(13) in tRNA = pseudouridine(13) in tRNA. The enzyme catalyses a uridine in mRNA = a pseudouridine in mRNA. In terms of biological role, pseudouridylate synthase that catalyzes pseudouridylation of RNAs. Acts as a regulator of protein synthesis in embryonic stem cells by mediating pseudouridylation of RNA fragments derived from tRNAs (tRFs): pseudouridylated tRFs inhibit translation by targeting the translation initiation complex. Also catalyzes pseudouridylation of mRNAs: mediates pseudouridylation of mRNAs with the consensus sequence 5'-UGUAG-3'. Acts as a regulator of pre-mRNA splicing by mediating pseudouridylation of pre-mRNAs at locations associated with alternatively spliced regions. Pseudouridylation of pre-mRNAs near splice sites directly regulates mRNA splicing and mRNA 3'-end processing. In addition to mRNAs and tRNAs, binds other types of RNAs, such as snRNAs, Y RNAs and vault RNAs, suggesting that it can catalyze pseudouridylation of many RNA types. This Homo sapiens (Human) protein is Pseudouridylate synthase 7 homolog.